A 406-amino-acid chain; its full sequence is Propionate kinase (406 aa).

ATP-binding residues include asparagine 11 and lysine 18. Asparagine 11 contributes to the Mg(2+) binding site. Arginine 86 provides a ligand contact to substrate. Aspartate 143 functions as the Proton donor/acceptor in the catalytic mechanism. ATP contacts are provided by residues histidine 175, 203–207 (HLGNG), 278–280 (DMR), and 326–330 (GIGEN).

This sequence belongs to the acetokinase family. TdcD subfamily. Homodimer. Mg(2+) serves as cofactor.

The enzyme catalyses propanoate + ATP = propanoyl phosphate + ADP. Its pathway is amino-acid degradation; L-threonine degradation via propanoate pathway; propanoate from L-threonine: step 4/4. In terms of biological role, catalyzes the conversion of propionyl phosphate and ADP to propionate and ATP. This Yersinia enterocolitica serotype O:8 / biotype 1B (strain NCTC 13174 / 8081) protein is Propionate kinase.